The following is a 440-amino-acid chain: N-succinylarginine dihydrolase (440 aa).

Substrate-binding positions include 17 to 26 (GGLSPGNLAS), N108, and 135 to 136 (HR). Residues 17 to 37 (GGLSPGNLASQSHVGEPSHPR) are disordered. E172 is an active-site residue. R210 contributes to the substrate binding site. The active site involves H246. Positions 248 and 358 each coordinate substrate. C364 serves as the catalytic Nucleophile.

This sequence belongs to the succinylarginine dihydrolase family. In terms of assembly, homodimer.

It catalyses the reaction N(2)-succinyl-L-arginine + 2 H2O + 2 H(+) = N(2)-succinyl-L-ornithine + 2 NH4(+) + CO2. It participates in amino-acid degradation; L-arginine degradation via AST pathway; L-glutamate and succinate from L-arginine: step 2/5. In terms of biological role, catalyzes the hydrolysis of N(2)-succinylarginine into N(2)-succinylornithine, ammonia and CO(2). The polypeptide is N-succinylarginine dihydrolase (Myxococcus xanthus (strain DK1622)).